A 145-amino-acid chain; its full sequence is Ecdysteroid-regulated 16 kDa protein (145 aa).

The signal sequence occupies residues 1–16 (MLFYITVTVLLVSAQA). 2 disulfide bridges follow: C22-C137 and C90-C97. N51 carries an N-linked (GlcNAc...) asparagine glycan.

It belongs to the NPC2 family.

It is found in the secreted. This Manduca sexta (Tobacco hawkmoth) protein is Ecdysteroid-regulated 16 kDa protein (ESR16).